The sequence spans 50 residues: Large ribosomal subunit protein bL33B (50 aa).

It belongs to the bacterial ribosomal protein bL33 family.

This Metamycoplasma arthritidis (strain 158L3-1) (Mycoplasma arthritidis) protein is Large ribosomal subunit protein bL33B.